The primary structure comprises 515 residues: Interferon-induced, double-stranded RNA-activated protein kinase (515 aa).

An N-acetylalanine modification is found at Ala-2. The DRBM 1 domain maps to Phe-8–Asn-76. A Glycyl lysine isopeptide (Lys-Gly) (interchain with G-Cter in ISG15) cross-link involves residue Lys-68. At Thr-84 the chain carries Phosphothreonine. One can recognise a DRBM 2 domain in the interval Asn-95–Lys-162. Phosphotyrosine; by autocatalysis is present on Tyr-96. Residue Lys-154 forms a Glycyl lysine isopeptide (Lys-Gly) (interchain with G-Cter in ISG15) linkage. Position 157 is a phosphotyrosine; by autocatalysis (Tyr-157). The disordered stretch occupies residues Glu-204–Pro-224. Position 233 is a phosphothreonine (Thr-233). The segment at Asp-241–Cys-515 is interaction with TRAF5. The Protein kinase domain occupies Phe-242–Arg-504. Ile-248–Val-256 lines the ATP pocket. The residue at position 268 (Tyr-268) is a Phosphotyrosine; by autocatalysis. Lys-271 provides a ligand contact to ATP. Asp-376 serves as the catalytic Proton acceptor. Residues Thr-409 and Thr-414 each carry the phosphothreonine; by autocatalysis modification. Position 419 is a phosphoserine (Ser-419).

It belongs to the protein kinase superfamily. Ser/Thr protein kinase family. GCN2 subfamily. Homodimer. Interacts with DNAJC3 and STRBP. Forms a complex with FANCA, FANCC, FANCG and HSP70. Interacts with ADAR/ADAR1. The inactive form interacts with NCK1. Interacts (via the kinase catalytic domain) with STAT3 (via SH2 domain), TRAF2 (C-terminus), TRAF5 (C-terminus) and TRAF6 (C-terminus). Interacts with MAP2K6, TARBP2, NLRP1, NLRC4 and AIM2. Interacts (via DRBM 1 domain) with DUS2L (via DRBM domain). Interacts with DHX9 (via N-terminus) and this interaction is dependent upon activation of the kinase. The inactive form interacts with GSN. Interacts with IKBKB/IKKB, NPM1, NLRP3 and IRS1. Post-translationally, autophosphorylated on several Ser, Thr and Tyr residues. Autophosphorylation of Thr-414 is dependent on Thr-409 and is stimulated by dsRNA binding and dimerization. Autophosphorylation apparently leads to the activation of the kinase. Tyrosine autophosphorylation is essential for efficient dsRNA-binding, dimerization, and kinase activation. Expressed in heart, lung, brain, kidney, testes, thymus and bone marrow.

The protein localises to the cytoplasm. It localises to the nucleus. It is found in the perinuclear region. It catalyses the reaction L-seryl-[protein] + ATP = O-phospho-L-seryl-[protein] + ADP + H(+). The catalysed reaction is L-threonyl-[protein] + ATP = O-phospho-L-threonyl-[protein] + ADP + H(+). The enzyme catalyses L-tyrosyl-[protein] + ATP = O-phospho-L-tyrosyl-[protein] + ADP + H(+). With respect to regulation, initially produced in an inactive form and is activated by binding to viral dsRNA, which causes dimerization and autophosphorylation in the activation loop and stimulation of function. ISGylation can activate it in the absence of viral infection. Can also be activated by heparin, pro-inflammatory stimuli, growth factors, cytokines, oxidative stress and the cellular protein PRKRA. Activity is markedly stimulated by manganese ions. Activation is blocked by the cellular proteins TARBP2, DUS2L, NPM1, NCK1 and ADAR. In terms of biological role, IFN-induced dsRNA-dependent serine/threonine-protein kinase that phosphorylates the alpha subunit of eukaryotic translation initiation factor 2 (EIF2S1/eIF-2-alpha) and plays a key role in the innate immune response to viral infection. Inhibits viral replication via the integrated stress response (ISR): EIF2S1/eIF-2-alpha phosphorylation in response to viral infection converts EIF2S1/eIF-2-alpha in a global protein synthesis inhibitor, resulting to a shutdown of cellular and viral protein synthesis, while concomitantly initiating the preferential translation of ISR-specific mRNAs, such as the transcriptional activator ATF4. Exerts its antiviral activity on a wide range of DNA and RNA viruses including west nile virus (WNV), sindbis virus (SV), foot-and-mouth virus (FMDV), semliki Forest virus (SFV) and lymphocytic choriomeningitis virus (LCMV). Also involved in the regulation of signal transduction, apoptosis, cell proliferation and differentiation: phosphorylates other substrates including p53/TP53, PPP2R5A, DHX9, ILF3, and IRS1. In addition to serine/threonine-protein kinase activity, also has tyrosine-protein kinase activity and phosphorylates CDK1 at 'Tyr-4' upon DNA damage, facilitating its ubiquitination and proteasomal degradation. Either as an adapter protein and/or via its kinase activity, can regulate various signaling pathways (p38 MAP kinase, NF-kappa-B and insulin signaling pathways) and transcription factors (JUN, STAT1, STAT3, IRF1, ATF3) involved in the expression of genes encoding pro-inflammatory cytokines and IFNs. Activates the NF-kappa-B pathway via interaction with IKBKB and TRAF family of proteins and activates the p38 MAP kinase pathway via interaction with MAP2K6. Can act as both a positive and negative regulator of the insulin signaling pathway (ISP). Negatively regulates ISP by inducing the inhibitory phosphorylation of insulin receptor substrate 1 (IRS1) at 'Ser-312' and positively regulates ISP via phosphorylation of PPP2R5A which activates FOXO1, which in turn up-regulates the expression of insulin receptor substrate 2 (IRS2). Can regulate NLRP3 inflammasome assembly and the activation of NLRP3, NLRP1, AIM2 and NLRC4 inflammasomes. Plays a role in the regulation of the cytoskeleton by binding to gelsolin (GSN), sequestering the protein in an inactive conformation away from actin. The polypeptide is Interferon-induced, double-stranded RNA-activated protein kinase (Eif2ak2) (Mus musculus (Mouse)).